Here is a 502-residue protein sequence, read N- to C-terminus: Premnaspirodiene oxygenase (502 aa).

The chain crosses the membrane as a helical span at residues 2–22; it reads QFFSLVSIFLFLSFLFLLRKW. Cys-440 contacts heme.

Belongs to the cytochrome P450 family. Heme is required as a cofactor.

The protein resides in the membrane. The catalysed reaction is (-)-vetispiradiene + 2 reduced [NADPH--hemoprotein reductase] + 2 O2 = solavetivone + 2 oxidized [NADPH--hemoprotein reductase] + 3 H2O + 2 H(+). Its function is as follows. Involved in the biosynthesis of solavetivone, a potent antifungal phytoalexin. Catalyzes the successive and independent hydroxylations of premnaspirodiene and solavetivol. The first hydroxylation step is 3-fold more efficient than the second hydroxylation reaction. The chain is Premnaspirodiene oxygenase (CYP71D55) from Hyoscyamus muticus (Egyptian henbane).